Here is a 169-residue protein sequence, read N- to C-terminus: Lutropin/choriogonadotropin subunit beta (169 aa).

The N-terminal stretch at 1 to 20 (METLQGLLLWMLLSVGGVWA) is a signal peptide. 6 disulfides stabilise this stretch: Cys29-Cys77, Cys43-Cys92, Cys46-Cys130, Cys54-Cys108, Cys58-Cys110, and Cys113-Cys120. The N-linked (GlcNAc...) asparagine glycan is linked to Asn33. Positions 131-169 (APQASSSSKDPPSQPLTSTSTPTPGASRRSSHPLPIKTS) are disordered. 2 O-linked (GalNAc...) serine glycosylation sites follow: Ser138 and Ser143. A compositionally biased stretch (low complexity) spans 145-158 (PLTSTSTPTPGASR). Thr147 carries an O-linked (GalNAc...) threonine glycan. A glycan (O-linked (GalNAc...) serine) is linked at Ser148. Thr149 carries O-linked (GalNAc...) threonine glycosylation. Ser150 carries an O-linked (GalNAc...) serine glycan. Residues Thr151 and Thr153 are each glycosylated (O-linked (GalNAc...) threonine). O-linked (GalNAc...) serine glycosylation is found at Ser157, Ser160, Ser161, and Ser169.

Belongs to the glycoprotein hormones subunit beta family. In terms of assembly, heterodimer of a common alpha chain and a unique beta chain which confers biological specificity to thyrotropin, lutropin, follitropin and gonadotropin. Microheterogeneity at Asn-33. O-glycosylation appears to be responsible for the beta subunit contribution to the difference in LH-receptor binding activity between LSH-B and CG-B.

It localises to the secreted. In terms of biological role, promotes spermatogenesis and ovulation by stimulating the testes and ovaries to synthesize steroids. This Equus caballus (Horse) protein is Lutropin/choriogonadotropin subunit beta (LHB).